The chain runs to 533 residues: Retinoic acid receptor RXR-beta (533 aa).

The disordered stretch occupies residues 1–24; it reads MSWAARPPFLPQRHAAGQCGPVGV. The modulating stretch occupies residues 1–204; the sequence is MSWAARPPFL…PGGPGAGKRL (204 aa). Omega-N-methylarginine is present on arginine 25. The interval 37 to 183 is disordered; sequence RRRRPWLDPA…GPPEDVKPPV (147 aa). Residues 46 to 61 are compositionally biased toward low complexity; that stretch reads AAAAAAAAAAGEQQTP. Residues 67–82 show a composition bias toward basic and acidic residues; that stretch reads EAGRDGMGDSGRDSRS. Positions 83 to 94 are enriched in low complexity; the sequence is PDSSSPNPLSQG. Pro residues-rich tracts occupy residues 95 to 109 and 118 to 129; these read APPP…PPSS and APPPPPMPPPQL. A compositionally biased stretch (low complexity) spans 130-143; the sequence is GSPFPVISSSMGSP. Pro residues predominate over residues 144 to 153; that stretch reads GLPPPAPPGF. 2 NR C4-type zinc fingers span residues 205 to 225 and 241 to 265; these read CAIC…CEGC and CRDN…YQKC. The nuclear receptor DNA-binding region spans 205–270; the sequence is CAICGDRSSG…RYQKCLATGM (66 aa). Residues 271-295 form a hinge region; that stretch reads KREAVQEERQRGKDKDGDGEGAGGA. The segment covering 276–288 has biased composition (basic and acidic residues); that stretch reads QEERQRGKDKDGD. Disordered regions lie at residues 276–299 and 313–336; these read QEER…PEEM and QKSD…NDPV. The 234-residue stretch at 296 to 529 folds into the NR LBD domain; that stretch reads PEEMPVDRIL…TFLMEMLEAP (234 aa). A compositionally biased stretch (gly residues) spans 320–329; it reads EGPGGTGGSG.

This sequence belongs to the nuclear hormone receptor family. NR2 subfamily. In terms of assembly, homodimer (in vitro). Heterodimer with other retinoic acid receptor family members. Binds DNA preferentially as a RAR/RXR heterodimer. Interacts with NR1H3. Interacts with AKAP13.

It localises to the nucleus. Its subcellular location is the cytoplasm. Its function is as follows. Receptor for retinoic acid. Retinoic acid receptors bind as heterodimers to their target response elements in response to their ligands, all-trans or 9-cis retinoic acid, and regulate gene expression in various biological processes. The RAR/RXR heterodimers bind to the retinoic acid response elements (RARE). This Canis lupus familiaris (Dog) protein is Retinoic acid receptor RXR-beta (RXRB).